The following is a 249-amino-acid chain: 3-deoxy-manno-octulosonate cytidylyltransferase (249 aa).

The protein belongs to the KdsB family.

The protein localises to the cytoplasm. The enzyme catalyses 3-deoxy-alpha-D-manno-oct-2-ulosonate + CTP = CMP-3-deoxy-beta-D-manno-octulosonate + diphosphate. The protein operates within nucleotide-sugar biosynthesis; CMP-3-deoxy-D-manno-octulosonate biosynthesis; CMP-3-deoxy-D-manno-octulosonate from 3-deoxy-D-manno-octulosonate and CTP: step 1/1. It participates in bacterial outer membrane biogenesis; lipopolysaccharide biosynthesis. Activates KDO (a required 8-carbon sugar) for incorporation into bacterial lipopolysaccharide in Gram-negative bacteria. The polypeptide is 3-deoxy-manno-octulosonate cytidylyltransferase (Photorhabdus laumondii subsp. laumondii (strain DSM 15139 / CIP 105565 / TT01) (Photorhabdus luminescens subsp. laumondii)).